A 705-amino-acid polypeptide reads, in one-letter code: Polyribonucleotide nucleotidyltransferase (705 aa).

Mg(2+) contacts are provided by D487 and D493. The 60-residue stretch at 554–613 (PKILTMTINPDKIRDVIGPSGKQINKIIEETGVKIDIEQDGTIFISSTDESGNQKAKKII) folds into the KH domain. An S1 motif domain is found at 623–691 (GQLYLGKVKR…KQGRVNLSRK (69 aa)).

It belongs to the polyribonucleotide nucleotidyltransferase family. In terms of assembly, homodimer. Component of a possible RNA degradosome complex composed of rny, rnjA, rnjB, pnp, pfkA and eno (although rnjA and rnjB's presence is unclear). RNA helicase CshA may also be a member of this complex. Requires Mg(2+) as cofactor.

It is found in the cytoplasm. The catalysed reaction is RNA(n+1) + phosphate = RNA(n) + a ribonucleoside 5'-diphosphate. Involved in mRNA degradation. Catalyzes the phosphorolysis of single-stranded polyribonucleotides processively in the 3'- to 5'-direction. Necessary for competence development in Bacillus subtilis. May be necessary for modification of the srfA transcript (stabilization or translation activation). Involved in processing precursor type I toxin-antitoxin RNAs antitoxin SR4 and SR5 RNAs to their mature forms. The chain is Polyribonucleotide nucleotidyltransferase from Bacillus subtilis (strain 168).